Here is a 100-residue protein sequence, read N- to C-terminus: Small ribosomal subunit protein bS21 (100 aa).

Basic and acidic residues predominate over residues 37 to 52 (EKPSEKKAREKAEAVR). Residues 37–100 (EKPSEKKARE…GAGAGPRGPR (64 aa)) are disordered. Basic residues predominate over residues 53-62 (RARKLARKKL). Over residues 84–100 (GAAGAGAGAGAGPRGPR) the composition is skewed to gly residues.

This sequence belongs to the bacterial ribosomal protein bS21 family.

The protein is Small ribosomal subunit protein bS21 of Rhodopseudomonas palustris (strain BisB5).